Consider the following 140-residue polypeptide: ATP synthase epsilon chain (140 aa).

It belongs to the ATPase epsilon chain family. As to quaternary structure, F-type ATPases have 2 components, CF(1) - the catalytic core - and CF(0) - the membrane proton channel. CF(1) has five subunits: alpha(3), beta(3), gamma(1), delta(1), epsilon(1). CF(0) has three main subunits: a, b and c.

The protein resides in the cell inner membrane. Functionally, produces ATP from ADP in the presence of a proton gradient across the membrane. This Vibrio parahaemolyticus serotype O3:K6 (strain RIMD 2210633) protein is ATP synthase epsilon chain.